Here is a 79-residue protein sequence, read N- to C-terminus: D-alanyl carrier protein (79 aa).

Positions 2–79 (AEFKEQVLDI…MVIKKLEEIR (78 aa)) constitute a Carrier domain. Serine 37 is subject to O-(pantetheine 4'-phosphoryl)serine.

The protein belongs to the DltC family. In terms of processing, 4'-phosphopantetheine is transferred from CoA to a specific serine of apo-DCP.

It is found in the cytoplasm. It participates in cell wall biogenesis; lipoteichoic acid biosynthesis. Its function is as follows. Carrier protein involved in the D-alanylation of lipoteichoic acid (LTA). The loading of thioester-linked D-alanine onto DltC is catalyzed by D-alanine--D-alanyl carrier protein ligase DltA. The DltC-carried D-alanyl group is further transferred to cell membrane phosphatidylglycerol (PG) by forming an ester bond, probably catalyzed by DltD. D-alanylation of LTA plays an important role in modulating the properties of the cell wall in Gram-positive bacteria, influencing the net charge of the cell wall. This is D-alanyl carrier protein from Bacillus anthracis (strain CDC 684 / NRRL 3495).